A 387-amino-acid polypeptide reads, in one-letter code: S-adenosylmethionine synthase (387 aa).

Residue His15 coordinates ATP. Asp17 lines the Mg(2+) pocket. K(+) is bound at residue Glu43. Residues Glu56 and Gln99 each contribute to the L-methionine site. The interval 99 to 109 is flexible loop; it reads QSPDIAQGVNA. ATP-binding positions include 166–168, 232–233, Asp241, 247–248, Ala264, and Lys268; these read DAK, RF, and RK. Asp241 is a binding site for L-methionine. Lys272 is an L-methionine binding site.

Belongs to the AdoMet synthase family. As to quaternary structure, homotetramer; dimer of dimers. Requires Mg(2+) as cofactor. K(+) serves as cofactor.

The protein resides in the cytoplasm. The enzyme catalyses L-methionine + ATP + H2O = S-adenosyl-L-methionine + phosphate + diphosphate. Its pathway is amino-acid biosynthesis; S-adenosyl-L-methionine biosynthesis; S-adenosyl-L-methionine from L-methionine: step 1/1. Catalyzes the formation of S-adenosylmethionine (AdoMet) from methionine and ATP. The overall synthetic reaction is composed of two sequential steps, AdoMet formation and the subsequent tripolyphosphate hydrolysis which occurs prior to release of AdoMet from the enzyme. The sequence is that of S-adenosylmethionine synthase from Dechloromonas aromatica (strain RCB).